A 445-amino-acid chain; its full sequence is MSSTHPGRTIRSGATQNLSGTIRPAADKSISHRSVIFGALAEGETHVKGMLEGEDVLRTITAFRTMGISIERCNEGEYRIQGQGLDGLKEPDDVLDMGNSGTAMRLLCGLLASQPFHSILTGDHSLRSRPMGRVVQPLTKMGARIRGRDGGRLAPLAIEGTELVPITYNSPIASAQVKSAIILAGLNTAGETTIIEPAVSRDHTERMLIAFGAEVTRDGNQVTIEGWPNLQGQEIEVPADISAAAFPMVAALITPGSDIILENVGMNPTRTGILDLLLAMGGNIQRLNEREVGGEPVADLQVRYSQLQGIEIDPTVVPRAIDEFPVFFVAAALAQGQTLVQGAEELRVKESDRITAMANGLKALGAIIEERPDGALITGNPDGLAGGASVDSFTDHRIAMSLLVAGLRCKESVLVQRCDNINTSFPSFSQLMNSLGFQLEDVSHG.

Residues 1–20 (MSSTHPGRTIRSGATQNLSG) show a composition bias toward polar residues. The interval 1–24 (MSSTHPGRTIRSGATQNLSGTIRP) is disordered. 3-phosphoshikimate contacts are provided by lysine 28, serine 29, and arginine 33. A phosphoenolpyruvate-binding site is contributed by lysine 28. Positions 101 and 129 each coordinate phosphoenolpyruvate. Residues serine 174, glutamine 176, aspartate 322, and lysine 349 each coordinate 3-phosphoshikimate. Phosphoenolpyruvate is bound at residue glutamine 176. Aspartate 322 serves as the catalytic Proton acceptor. Positions 353 and 397 each coordinate phosphoenolpyruvate.

Belongs to the EPSP synthase family. In terms of assembly, monomer.

It localises to the cytoplasm. It carries out the reaction 3-phosphoshikimate + phosphoenolpyruvate = 5-O-(1-carboxyvinyl)-3-phosphoshikimate + phosphate. The protein operates within metabolic intermediate biosynthesis; chorismate biosynthesis; chorismate from D-erythrose 4-phosphate and phosphoenolpyruvate: step 6/7. Functionally, catalyzes the transfer of the enolpyruvyl moiety of phosphoenolpyruvate (PEP) to the 5-hydroxyl of shikimate-3-phosphate (S3P) to produce enolpyruvyl shikimate-3-phosphate and inorganic phosphate. This Magnetococcus marinus (strain ATCC BAA-1437 / JCM 17883 / MC-1) protein is 3-phosphoshikimate 1-carboxyvinyltransferase.